The sequence spans 520 residues: Keratin, type II cytoskeletal 8 (520 aa).

The span at 1-19 (MSTYSKKTSYTVKSSSSGS) shows a compositional bias: low complexity. The segment at 1–20 (MSTYSKKTSYTVKSSSSGSI) is disordered. A head region spans residues 2–114 (STYSKKTSYT…DPNIQIVRTQ (113 aa)). A Phosphoserine modification is found at Ser-28. Residues 115–150 (EKEQIKTLNNRFASFIDKVRFLEQQNKMLETKWSLL) form a coil 1A region. The IF rod domain occupies 115 to 426 (EKEQIKTLNN…KLLEGEEDRL (312 aa)). The segment at 151 to 166 (QNQTATRSNIDAMFEA) is linker 1. The interval 168–259 (IANLRRQLDS…QIFEEEIREL (92 aa)) is coil 1B. Positions 260 to 283 (QSQIKDTSVVVEMDNSRNLDMDAI) are linker 12. Positions 284–422 (VAEVRAQYED…ATYRKLLEGE (139 aa)) are coil 2. The interval 423–520 (EDRLATGIKA…VSESSEVVQD (98 aa)) is tail.

This sequence belongs to the intermediate filament family. In terms of assembly, heterotetramer of two type I and two type II keratins. Keratin-8 associates with keratin-18. Expressed in simple epithelia.

The protein resides in the cytoplasm. It localises to the nucleus. The protein localises to the nucleoplasm. It is found in the nucleus matrix. Together with KRT19, helps to link the contractile apparatus to dystrophin at the costameres of striated muscle. This chain is Keratin, type II cytoskeletal 8, found in Danio rerio (Zebrafish).